The sequence spans 320 residues: Mitochondrial glycine transporter (320 aa).

Solcar repeat units lie at residues 8–92 (SKTT…LRQG), 121–205 (LSNW…LKRR), and 223–307 (SSSS…LILR). A run of 6 helical transmembrane segments spans residues 14-39 (FAAGLCSGLTSSILLQPADLLKTRVQ), 67-93 (GTLPSALRTGFGSALYFTSLNALRQGL), 127-152 (LATGAVARTAAGFVMMPVTVLKVRYE), 180-203 (GFGATAARDAPYAGLYVLFYEQLK), 227-253 (INFVSGGLAAGLATAITNPFDAVKTRL), and 282-300 (GLGLRITRKALSSALAWTV).

Belongs to the mitochondrial carrier (TC 2.A.29) family. SLC25A38 subfamily.

The protein resides in the mitochondrion inner membrane. It carries out the reaction glycine(in) = glycine(out). In terms of biological role, mitochondrial glycine transporter that imports glycine into the mitochondrial matrix. Plays an important role in providing glycine for the first enzymatic step in heme biosynthesis, the condensation of glycine with succinyl-CoA to produce 5-aminolevulinate (ALA) in the mitochondrial matrix. This Aspergillus fumigatus (strain CBS 144.89 / FGSC A1163 / CEA10) (Neosartorya fumigata) protein is Mitochondrial glycine transporter.